Reading from the N-terminus, the 131-residue chain is Protein Turandot M (131 aa).

The signal sequence occupies residues 1-23 (MNPTIYLSCLMVFSVFLLGKVNA).

Belongs to the Turandot family.

Its subcellular location is the secreted. A humoral factor that may play a role in stress tolerance. Requires Mekk1 expression in the fat body to regulate response to septic injury and consequent immune response. This Drosophila melanogaster (Fruit fly) protein is Protein Turandot M.